The primary structure comprises 304 residues: Porphobilinogen deaminase (304 aa).

Cysteine 239 bears the S-(dipyrrolylmethanemethyl)cysteine mark.

Belongs to the HMBS family. As to quaternary structure, monomer. Dipyrromethane is required as a cofactor.

It carries out the reaction 4 porphobilinogen + H2O = hydroxymethylbilane + 4 NH4(+). The protein operates within porphyrin-containing compound metabolism; protoporphyrin-IX biosynthesis; coproporphyrinogen-III from 5-aminolevulinate: step 2/4. In terms of biological role, tetrapolymerization of the monopyrrole PBG into the hydroxymethylbilane pre-uroporphyrinogen in several discrete steps. The polypeptide is Porphobilinogen deaminase (Brucella ovis (strain ATCC 25840 / 63/290 / NCTC 10512)).